The chain runs to 204 residues: Cell wall protein RHD3 (204 aa).

The N-terminal stretch at 1–15 is a signal peptide; the sequence is MKFLAILSLSSSALA. A lipid anchor (GPI-anchor amidated glycine) is attached at glycine 182. A propeptide spans 183–204 (removed in mature form); sequence AAGQNKLSYGVGMAAVVAGLVM.

This sequence belongs to the SRP1/TIP1 family. The GPI-anchor is attached to the protein in the endoplasmic reticulum and serves to target the protein to the cell surface. There, the glucosamine-inositol phospholipid moiety is cleaved off and the GPI-modified mannoprotein is covalently attached via its lipidless GPI glycan remnant to the 1,6-beta-glucan of the outer cell wall layer. In terms of processing, O-glycosylated by PMT1.

It is found in the secreted. The protein resides in the cell wall. It localises to the membrane. In terms of biological role, component of the cell wall involved in virulence. Does not seem to have a major role in maintaining cell wall integrity but plays a role in the relationship between C.albicans and the host. The chain is Cell wall protein RHD3 (RHD3) from Candida albicans (strain SC5314 / ATCC MYA-2876) (Yeast).